A 359-amino-acid polypeptide reads, in one-letter code: 3-dehydroquinate synthase (359 aa).

NAD(+) contacts are provided by residues 71–76 (DGEAYK), 105–109 (GVIGD), 129–130 (TT), Lys-142, and Lys-151. Zn(2+)-binding residues include Glu-184, His-247, and His-264.

The protein belongs to the sugar phosphate cyclases superfamily. Dehydroquinate synthase family. Co(2+) serves as cofactor. It depends on Zn(2+) as a cofactor. NAD(+) is required as a cofactor.

It is found in the cytoplasm. The enzyme catalyses 7-phospho-2-dehydro-3-deoxy-D-arabino-heptonate = 3-dehydroquinate + phosphate. Its pathway is metabolic intermediate biosynthesis; chorismate biosynthesis; chorismate from D-erythrose 4-phosphate and phosphoenolpyruvate: step 2/7. Its function is as follows. Catalyzes the conversion of 3-deoxy-D-arabino-heptulosonate 7-phosphate (DAHP) to dehydroquinate (DHQ). The chain is 3-dehydroquinate synthase from Burkholderia vietnamiensis (strain G4 / LMG 22486) (Burkholderia cepacia (strain R1808)).